We begin with the raw amino-acid sequence, 584 residues long: Arginine--tRNA ligase (584 aa).

Residues 126–136 (PNIAKEMHVGH) carry the 'HIGH' region motif.

The protein belongs to the class-I aminoacyl-tRNA synthetase family. In terms of assembly, monomer.

It localises to the cytoplasm. The enzyme catalyses tRNA(Arg) + L-arginine + ATP = L-arginyl-tRNA(Arg) + AMP + diphosphate. This chain is Arginine--tRNA ligase, found in Nostoc punctiforme (strain ATCC 29133 / PCC 73102).